Here is a 34-residue protein sequence, read N- to C-terminus: Photosystem II reaction center protein Psb30 (34 aa).

Residues 5–25 traverse the membrane as a helical segment; sequence VLAQLTVLAFVIAVGPITLIW.

The protein belongs to the Psb30/Ycf12 family. PSII is composed of 1 copy each of membrane proteins PsbA, PsbB, PsbC, PsbD, PsbE, PsbF, PsbH, PsbI, PsbJ, PsbK, PsbL, PsbM, PsbT, PsbX, PsbY, PsbZ, Psb30/Ycf12, peripheral proteins of the oxygen-evolving complex and a large number of cofactors. It forms dimeric complexes.

Its subcellular location is the plastid. It localises to the chloroplast thylakoid membrane. A core subunit of photosystem II (PSII), probably helps stabilize the reaction center. This chain is Photosystem II reaction center protein Psb30, found in Cyanidioschyzon merolae (strain NIES-3377 / 10D) (Unicellular red alga).